The sequence spans 444 residues: Adenylosuccinate synthetase (444 aa).

Residues 12–18 and 40–42 contribute to the GTP site; these read GDEGKGK and GHT. Aspartate 13 acts as the Proton acceptor in catalysis. Residues aspartate 13 and glycine 40 each contribute to the Mg(2+) site. IMP-binding positions include 13-16, 38-41, threonine 128, arginine 142, glutamine 223, threonine 238, and arginine 302; these read DEGK and NAGH. The active-site Proton donor is the histidine 41. 298–304 lines the substrate pocket; sequence TTTGRRR. GTP is bound by residues arginine 304, 330 to 332, and 412 to 414; these read KLD and SLG.

Belongs to the adenylosuccinate synthetase family. In terms of assembly, homodimer. Mg(2+) is required as a cofactor.

Its subcellular location is the cytoplasm. It carries out the reaction IMP + L-aspartate + GTP = N(6)-(1,2-dicarboxyethyl)-AMP + GDP + phosphate + 2 H(+). It participates in purine metabolism; AMP biosynthesis via de novo pathway; AMP from IMP: step 1/2. Its function is as follows. Plays an important role in the de novo pathway of purine nucleotide biosynthesis. Catalyzes the first committed step in the biosynthesis of AMP from IMP. This Synechococcus elongatus (strain ATCC 33912 / PCC 7942 / FACHB-805) (Anacystis nidulans R2) protein is Adenylosuccinate synthetase.